The primary structure comprises 448 residues: Nucleoprotein (448 aa).

The interval 1–55 is disordered; the sequence is MSFTPGKQSSSRASSGNRSGNGILKWADQSDQSRNVQTRGRRAQPKQTATSQQPS. The span at 9–22 shows a compositional bias: low complexity; sequence SSSRASSGNRSGNG. Composition is skewed to polar residues over residues 29-38 and 45-55; these read QSDQSRNVQT and PKQTATSQQPS. Residues 52–194 form an RNA-binding region; the sequence is QQPSGGNVVP…GYYIEGSGRS (143 aa). A CoV N NTD domain is found at 61-190; the sequence is PYYSWFSGIT…VLPQGYYIEG (130 aa). RNA contacts are provided by R106, R122, and R164. Positions 157–231 are disordered; it reads TPADILDRDP…RTPTSGVTPD (75 aa). S167 is subject to Phosphoserine; by host. A Phosphothreonine; by host modification is found at T174. S191 bears the Phosphoserine; by host mark. Positions 193–223 are enriched in low complexity; it reads RSAPNSRSTSRASSRASSAGSRSRANSGNRT. A CoV N CTD domain is found at 259–384; that stretch reads AKEIRQKILN…ENLNAYQQQD (126 aa). Positions 266–384 are dimerization; the sequence is ILNKPRQKRS…ENLNAYQQQD (119 aa). Positions 385–448 are disordered; it reads GMMNMSPKPQ…EPYTEDTSEI (64 aa). At S390 the chain carries Phosphoserine; by host. The segment covering 399 to 409 has biased composition (polar residues); sequence QKNGQGENDNI. Basic and acidic residues predominate over residues 422–439; the sequence is KSRELTAEDISLLKKMDE. At S423 the chain carries Phosphoserine; by host. Position 427 is a phosphothreonine; by host (T427).

This sequence belongs to the betacoronavirus nucleocapsid protein family. As to quaternary structure, homooligomer. Both monomeric and oligomeric forms interact with RNA. Interacts with protein M. Interacts with NSP3; this interaction serves to tether the genome to the newly translated replicase-transcriptase complex at a very early stage of infection. Post-translationally, ADP-ribosylated. The ADP-ribosylation is retained in the virion during infection. Phosphorylated on serine and threonine residues.

Its subcellular location is the virion. It localises to the host endoplasmic reticulum-Golgi intermediate compartment. The protein localises to the host Golgi apparatus. Its function is as follows. Packages the positive strand viral genome RNA into a helical ribonucleocapsid (RNP) and plays a fundamental role during virion assembly through its interactions with the viral genome and membrane protein M. Plays an important role in enhancing the efficiency of subgenomic viral RNA transcription as well as viral replication. The protein is Nucleoprotein of Bovine coronavirus (strain F15) (BCoV).